A 381-amino-acid polypeptide reads, in one-letter code: ATP synthase subunit a (381 aa).

Positions 24–73 are disordered; that stretch reads PVAAPVEQHGQAPEAAPDAHGSPAGEPGAAVEAHAAAAEHGEAAGHEGGH. The span at 47–59 shows a compositional bias: low complexity; that stretch reads AGEPGAAVEAHAA. Residues 60–73 are compositionally biased toward basic and acidic residues; sequence AAEHGEAAGHEGGH. The next 6 membrane-spanning stretches (helical) occupy residues 128–148, 190–210, 215–235, 255–275, 290–310, and 316–336; these read KHVVMMWLASALLLVVVLGAV, LVTAFFFILFLNLFGLLPFSA, NLSVTVAMALFTFVITQYAAI, LAPLWLIMIPVEFLGLFTKPF, FVILALLGLIFALGTPWVAFG, and LSIFLLELFVAFVQAYIFTML. Basic and acidic residues predominate over residues 351-360; that stretch reads DHGHAEEHGH. The interval 351 to 381 is disordered; that stretch reads DHGHAEEHGHAGPAAGSEHGSHVAGASPGHG.

Belongs to the ATPase A chain family. In terms of assembly, F-type ATPases have 2 components, CF(1) - the catalytic core - and CF(0) - the membrane proton channel. CF(1) has five subunits: alpha(3), beta(3), gamma(1), delta(1), epsilon(1). CF(0) has three main subunits: a(1), b(2) and c(9-12). The alpha and beta chains form an alternating ring which encloses part of the gamma chain. CF(1) is attached to CF(0) by a central stalk formed by the gamma and epsilon chains, while a peripheral stalk is formed by the delta and b chains.

It localises to the cell inner membrane. Its function is as follows. Key component of the proton channel; it plays a direct role in the translocation of protons across the membrane. The protein is ATP synthase subunit a of Anaeromyxobacter dehalogenans (strain 2CP-C).